Here is a 178-residue protein sequence, read N- to C-terminus: Ribosome maturation factor RimM (178 aa).

The PRC barrel domain occupies glutamine 99–phenylalanine 178.

It belongs to the RimM family. Binds ribosomal protein uS19.

It localises to the cytoplasm. An accessory protein needed during the final step in the assembly of 30S ribosomal subunit, possibly for assembly of the head region. Essential for efficient processing of 16S rRNA. May be needed both before and after RbfA during the maturation of 16S rRNA. It has affinity for free ribosomal 30S subunits but not for 70S ribosomes. This chain is Ribosome maturation factor RimM, found in Pseudoalteromonas translucida (strain TAC 125).